Consider the following 548-residue polypeptide: Fumarate hydratase class I, anaerobic (548 aa).

C105 is a [4Fe-4S] cluster binding site. K192 is subject to N6-acetyllysine. C224 and C318 together coordinate [4Fe-4S] cluster.

It belongs to the class-I fumarase family. Homodimer. [4Fe-4S] cluster serves as cofactor.

The enzyme catalyses (S)-malate = fumarate + H2O. The catalysed reaction is (S,S)-tartrate = oxaloacetate + H2O. Its function is as follows. Catalyzes the reversible hydration of fumarate to (S)-malate. Functions in the generation of fumarate for use as an anaerobic electron acceptor. To a lesser extent, also displays D-tartrate dehydratase activity, but is not able to convert (R)-malate, L-tartrate or meso-tartrate. Is required for anaerobic growth on D-tartrate. The protein is Fumarate hydratase class I, anaerobic of Escherichia coli (strain K12).